Reading from the N-terminus, the 143-residue chain is MSHDSDDKTYPYQKDDAELRRRLTPMQYEVTQHAATERAFTGEYTDTEDAGIYKCVVCSTPLFESGAKFHSGCGWPSYFKPLNGEVIDEKIDHMHGMVRVEVRCNHCGAHLGHVFEDGPRDKTGLRYCINSAALNFESRPEKE.

A MsrB domain is found at 16 to 139 (DAELRRRLTP…NSAALNFESR (124 aa)). Residues cysteine 55, cysteine 58, cysteine 104, and cysteine 107 each contribute to the Zn(2+) site. The active-site Nucleophile is the cysteine 128.

Belongs to the MsrB Met sulfoxide reductase family. Zn(2+) serves as cofactor.

It carries out the reaction L-methionyl-[protein] + [thioredoxin]-disulfide + H2O = L-methionyl-(R)-S-oxide-[protein] + [thioredoxin]-dithiol. The protein is Peptide methionine sulfoxide reductase MsrB of Burkholderia ambifaria (strain MC40-6).